The primary structure comprises 224 residues: MSEDLYEDDQDSQVSSGSRHPMAERFRGYLPVVVDVETGGFNSATDALLEIAAVTIGMDEKGFLFPEHTYFYRVEPFEGANIEAAALEFTGIKLDHPLRMAVSEESALTDIFRGVRKALKANGCKRAILVGHNSSFDLGFLNAAVARNDIKRNPFHPFSSFDTATLAGLAYGQTVLARACQSADIDFDGREAHSARYDTEKTAELFCGIVNRWKEMGGWRDFND.

Over residues 1–11 (MSEDLYEDDQD) the composition is skewed to acidic residues. Residues 1–20 (MSEDLYEDDQDSQVSSGSRH) form a disordered region. In terms of domain architecture, Exonuclease spans 32–206 (VVVDVETGGF…YDTEKTAELF (175 aa)). Aspartate 35, glutamate 37, histidine 193, and aspartate 198 together coordinate Mg(2+). The active-site Proton donor/acceptor is the histidine 193.

This sequence belongs to the RNase T family. In terms of assembly, homodimer. The cofactor is Mg(2+).

Its function is as follows. Trims short 3' overhangs of a variety of RNA species, leaving a one or two nucleotide 3' overhang. Responsible for the end-turnover of tRNA: specifically removes the terminal AMP residue from uncharged tRNA (tRNA-C-C-A). Also appears to be involved in tRNA biosynthesis. This chain is Ribonuclease T, found in Pseudomonas entomophila (strain L48).